A 301-amino-acid polypeptide reads, in one-letter code: Porphobilinogen deaminase (301 aa).

Position 235 is an S-(dipyrrolylmethanemethyl)cysteine (cysteine 235).

Belongs to the HMBS family. Monomer. Requires dipyrromethane as cofactor.

It carries out the reaction 4 porphobilinogen + H2O = hydroxymethylbilane + 4 NH4(+). It functions in the pathway porphyrin-containing compound metabolism; protoporphyrin-IX biosynthesis; coproporphyrinogen-III from 5-aminolevulinate: step 2/4. Tetrapolymerization of the monopyrrole PBG into the hydroxymethylbilane pre-uroporphyrinogen in several discrete steps. The chain is Porphobilinogen deaminase from Thermus thermophilus (strain ATCC BAA-163 / DSM 7039 / HB27).